Consider the following 142-residue polypeptide: Snaclec 2 (142 aa).

Residues 1-23 (MGRFIFVSFSLLVVFLSLSGTGA) form the signal peptide. C25 and C36 are disulfide-bonded. In terms of domain architecture, C-type lectin spans 32–139 (YEGHCYRVFQ…CSETHNVICK (108 aa)). The N-linked (GlcNAc...) asparagine glycan is linked to N43. Cystine bridges form between C53–C138 and C115–C130.

This sequence belongs to the snaclec family. Heterodimer; disulfide-linked. Expressed by the venom gland.

It is found in the secreted. Interferes with one step of hemostasis (modulation of platelet aggregation, or coagulation cascade, for example). The protein is Snaclec 2 of Sistrurus catenatus edwardsii (Desert massasauga).